Reading from the N-terminus, the 257-residue chain is Phosphate import ATP-binding protein PstB (257 aa).

The 249-residue stretch at 4–252 (LKLNDVNIYY…PDNKETEDYI (249 aa)) folds into the ABC transporter domain. 36–43 (GPSGCGKS) provides a ligand contact to ATP.

Belongs to the ABC transporter superfamily. Phosphate importer (TC 3.A.1.7) family. The complex is composed of two ATP-binding proteins (PstB), two transmembrane proteins (PstC and PstA) and a solute-binding protein (PstS).

It is found in the cell membrane. It catalyses the reaction phosphate(out) + ATP + H2O = ADP + 2 phosphate(in) + H(+). Part of the ABC transporter complex PstSACB involved in phosphate import. Responsible for energy coupling to the transport system. This Corynebacterium efficiens (strain DSM 44549 / YS-314 / AJ 12310 / JCM 11189 / NBRC 100395) protein is Phosphate import ATP-binding protein PstB.